A 608-amino-acid polypeptide reads, in one-letter code: UvrABC system protein C (608 aa).

Positions 13–91 (HDPGVYRMFD…IKTFQPRYNV (79 aa)) constitute a GIY-YIG domain. The 36-residue stretch at 201-236 (QQVLDHLIGKMERASRALNFEEAARYRDQIQAVRSV) folds into the UVR domain.

The protein belongs to the UvrC family. Interacts with UvrB in an incision complex.

Its subcellular location is the cytoplasm. Its function is as follows. The UvrABC repair system catalyzes the recognition and processing of DNA lesions. UvrC both incises the 5' and 3' sides of the lesion. The N-terminal half is responsible for the 3' incision and the C-terminal half is responsible for the 5' incision. The chain is UvrABC system protein C from Mannheimia succiniciproducens (strain KCTC 0769BP / MBEL55E).